Reading from the N-terminus, the 69-residue chain is Large ribosomal subunit protein bL28 (69 aa).

The protein belongs to the bacterial ribosomal protein bL28 family.

This Desulfovibrio desulfuricans (strain ATCC 27774 / DSM 6949 / MB) protein is Large ribosomal subunit protein bL28.